Reading from the N-terminus, the 137-residue chain is ATP synthase epsilon chain, chloroplastic (137 aa).

The protein belongs to the ATPase epsilon chain family. As to quaternary structure, F-type ATPases have 2 components, CF(1) - the catalytic core - and CF(0) - the membrane proton channel. CF(1) has five subunits: alpha(3), beta(3), gamma(1), delta(1), epsilon(1). CF(0) has three main subunits: a, b and c.

Its subcellular location is the plastid. It is found in the chloroplast thylakoid membrane. In terms of biological role, produces ATP from ADP in the presence of a proton gradient across the membrane. This chain is ATP synthase epsilon chain, chloroplastic, found in Pisum sativum (Garden pea).